The chain runs to 412 residues: MDVNQAKQEHLLALKVMRLTKPTLFTNMPVTCEDRDLPGDLFLRLMKDDPSTVKGAETLILGEMLTLPQNFGNIFLGETFSSYISVHNDSSQVVKDILVKADLQTSSQRLNLSASNSAVSELKPECCIDDVIHHEVKEIGTHILVCAVSYTTQTGEKLYFRKFFKFQVLKPLDVKTKFYNAETDEVFLEAQIQNITTSPMFMEKVSLEPSMMYNVTELNNVASGDESSESTFGKMSYLQPLDTRQYLYCLKPKPEFAEKAGVIKGVTVIGKLDIVWKTNLGERGRLQTSQLQRMAPGYGDVRLSLEFIPDTVDLEEPFDITCKITNCSERTMDLLLEMCNTRSVHWCGVSGRQLGKLSPSASLSIPLKLLSSVQGLQSISGLRLTDTFLKRTYEYDDIAQVCVVCPYTSPES.

Belongs to the TRAPPC13 family. Part of the multisubunit TRAPP (transport protein particle) complex.

In Danio rerio (Zebrafish), this protein is Trafficking protein particle complex subunit 13 (trappc13).